Here is a 129-residue protein sequence, read N- to C-terminus: 3-aminoacrylate deaminase RutC (129 aa).

This sequence belongs to the RutC family.

It carries out the reaction (Z)-3-aminoacrylate + H2O + H(+) = 3-oxopropanoate + NH4(+). Involved in pyrimidine catabolism. Catalyzes the deamination of 3-aminoacrylate to malonic semialdehyde, a reaction that can also occur spontaneously. RutC may facilitate the reaction and modulate the metabolic fitness, rather than catalyzing essential functions. The protein is 3-aminoacrylate deaminase RutC of Caulobacter segnis (strain ATCC 21756 / DSM 7131 / JCM 7823 / NBRC 15250 / LMG 17158 / TK0059) (Mycoplana segnis).